The following is a 458-amino-acid chain: Cysteine--tRNA ligase (458 aa).

Cys27 is a binding site for Zn(2+). The 'HIGH' region signature appears at 29 to 39 (ITPQSEPHIGH). 3 residues coordinate Zn(2+): Cys207, His232, and Glu236. Positions 265 to 269 (KMSKS) match the 'KMSKS' region motif. Lys268 is a binding site for ATP.

It belongs to the class-I aminoacyl-tRNA synthetase family. In terms of assembly, monomer. Zn(2+) is required as a cofactor.

It localises to the cytoplasm. It catalyses the reaction tRNA(Cys) + L-cysteine + ATP = L-cysteinyl-tRNA(Cys) + AMP + diphosphate. The polypeptide is Cysteine--tRNA ligase (Dehalococcoides mccartyi (strain ATCC BAA-2266 / KCTC 15142 / 195) (Dehalococcoides ethenogenes (strain 195))).